Reading from the N-terminus, the 147-residue chain is Large ribosomal subunit protein uL13 (147 aa).

It belongs to the universal ribosomal protein uL13 family. As to quaternary structure, part of the 50S ribosomal subunit.

Its function is as follows. This protein is one of the early assembly proteins of the 50S ribosomal subunit, although it is not seen to bind rRNA by itself. It is important during the early stages of 50S assembly. This Kocuria rhizophila (strain ATCC 9341 / DSM 348 / NBRC 103217 / DC2201) protein is Large ribosomal subunit protein uL13.